Here is a 433-residue protein sequence, read N- to C-terminus: MSKIVKVLGREIIDSRGNPTVEAEVHLEGGFVGMAAAPSGASTGSREALELRDGDKARFLGKGVLKAIEAVNGAIADALVGKDAKDQAAIDAIMIELDGTENKSKFGANAILAVSLANAKAAAASKGMPLYEHIAELNGTAGQFSMPLPMMNIINGGEHADNNVDIQEFMIQPVGAKTLKEAVRMGAEVFHNLAKVLKSKGYNTAVGDEGGFAPNLKSNAEALEVIAEAVAAAGYVLGKDVTLAMDCAASEFFDKEAGIYNMKGEGKTFTSEEFNHYLAGLVEQFPIVSIEDGLDESDWAGFAHQTQLLGDKIQLVGDDLFVTNTKILAEGIEKGIANSILIKFNQIGSLTETLAAIKMAKDAGYTAVISHRSGETEDATIADLAVGTAAGQIKTGSMSRSDRVAKYNQLIRIEEALAGRAPFNGLKEVKGQA.

Gln167 is a binding site for (2R)-2-phosphoglycerate. The active-site Proton donor is Glu209. Residues Asp246, Glu291, and Asp318 each contribute to the Mg(2+) site. Lys343, Arg372, Ser373, and Lys394 together coordinate (2R)-2-phosphoglycerate. The Proton acceptor role is filled by Lys343.

This sequence belongs to the enolase family. Component of the RNA degradosome, a multiprotein complex involved in RNA processing and mRNA degradation. Mg(2+) is required as a cofactor.

It is found in the cytoplasm. The protein resides in the secreted. Its subcellular location is the cell surface. The catalysed reaction is (2R)-2-phosphoglycerate = phosphoenolpyruvate + H2O. Its pathway is carbohydrate degradation; glycolysis; pyruvate from D-glyceraldehyde 3-phosphate: step 4/5. Its function is as follows. Catalyzes the reversible conversion of 2-phosphoglycerate (2-PG) into phosphoenolpyruvate (PEP). It is essential for the degradation of carbohydrates via glycolysis. The sequence is that of Enolase from Vibrio vulnificus (strain CMCP6).